Reading from the N-terminus, the 93-residue chain is MGESDVRLTAWVHGRVQGVGFRWWTRSRALELGLTGYAANKPDGRVQVVAQGSRAACERLLDLLTGGNTPGHVDKVISDWGEPADAIAGFTER.

The 87-residue stretch at 7-93 (RLTAWVHGRV…ADAIAGFTER (87 aa)) folds into the Acylphosphatase-like domain. Residues R22 and N40 contribute to the active site.

This sequence belongs to the acylphosphatase family.

It carries out the reaction an acyl phosphate + H2O = a carboxylate + phosphate + H(+). This Mycolicibacterium vanbaalenii (strain DSM 7251 / JCM 13017 / BCRC 16820 / KCTC 9966 / NRRL B-24157 / PYR-1) (Mycobacterium vanbaalenii) protein is Acylphosphatase (acyP).